A 1413-amino-acid chain; its full sequence is DNA-directed RNA polymerase subunit beta' (1413 aa).

The Zn(2+) site is built by Cys70, Cys72, Cys85, and Cys88. Mg(2+) contacts are provided by Asp460, Asp462, and Asp464. Residues Cys819, Cys893, Cys900, and Cys903 each contribute to the Zn(2+) site.

This sequence belongs to the RNA polymerase beta' chain family. The RNAP catalytic core consists of 2 alpha, 1 beta, 1 beta' and 1 omega subunit. When a sigma factor is associated with the core the holoenzyme is formed, which can initiate transcription. Mg(2+) serves as cofactor. Requires Zn(2+) as cofactor.

It carries out the reaction RNA(n) + a ribonucleoside 5'-triphosphate = RNA(n+1) + diphosphate. Functionally, DNA-dependent RNA polymerase catalyzes the transcription of DNA into RNA using the four ribonucleoside triphosphates as substrates. The protein is DNA-directed RNA polymerase subunit beta' of Burkholderia vietnamiensis (strain G4 / LMG 22486) (Burkholderia cepacia (strain R1808)).